The chain runs to 94 residues: MSSRRSSRSRQSGSSRISDDQISDLVSKLQHLIPELRRRRSDKVSASKVLQETCNYIRNLHREVDDLSDRLSELLASTDDNSAEAAIIRSLLNY.

The tract at residues 1–20 (MSSRRSSRSRQSGSSRISDD) is disordered. A bHLH domain is found at 6 to 60 (SSRSRQSGSSRISDDQISDLVSKLQHLIPELRRRRSDKVSASKVLQETCNYIRNL).

Belongs to the bHLH protein family. In terms of assembly, interacts with HFR1.

The protein localises to the cytoplasm. It localises to the nucleus. In terms of biological role, atypical and probable non DNA-binding bHLH transcription factor that regulates light-mediated responses in day light conditions by binding and inhibiting the activity of the bHLH transcription factor HFR1, a critical regulator of light signaling and shade avoidance. Forms non-functional heterodimers with HFR1, causing liberation and activation of PIF4 from the transcriptionally inactive HFR1-PIF4 complex. The polypeptide is Transcription factor PRE6 (PRE6) (Arabidopsis thaliana (Mouse-ear cress)).